The chain runs to 127 residues: Small ribosomal subunit protein bS6 (127 aa).

Positions V96–A127 are disordered. A compositionally biased stretch (basic and acidic residues) spans D117–A127.

It belongs to the bacterial ribosomal protein bS6 family.

Functionally, binds together with bS18 to 16S ribosomal RNA. This chain is Small ribosomal subunit protein bS6, found in Azoarcus sp. (strain BH72).